Consider the following 215-residue polypeptide: Cytochrome b6 (215 aa).

Residues 32–52 form a helical membrane-spanning segment; it reads IFYCLGGITLTCFLVQVATGF. Residue C35 participates in heme c binding. Positions 86 and 100 each coordinate heme b. 3 helical membrane-spanning segments follow: residues 90 to 110, 116 to 136, and 186 to 206; these read ASMM…TGGF, LTWV…VTGY, and LHTF…FPMI. 2 residues coordinate heme b: H187 and H202.

Belongs to the cytochrome b family. PetB subfamily. The 4 large subunits of the cytochrome b6-f complex are cytochrome b6, subunit IV (17 kDa polypeptide, PetD), cytochrome f and the Rieske protein, while the 4 small subunits are PetG, PetL, PetM and PetN. The complex functions as a dimer. Heme b serves as cofactor. It depends on heme c as a cofactor.

Its subcellular location is the plastid. The protein localises to the chloroplast thylakoid membrane. Functionally, component of the cytochrome b6-f complex, which mediates electron transfer between photosystem II (PSII) and photosystem I (PSI), cyclic electron flow around PSI, and state transitions. This is Cytochrome b6 from Agrostis stolonifera (Creeping bentgrass).